A 437-amino-acid chain; its full sequence is Protein WVD2-like 5 (437 aa).

Disordered stretches follow at residues 1–22, 38–210, and 254–437; these read MDPE…GGLA, TVDT…FSFK, and LRKS…AVEH. Residues 41–55 show a composition bias toward low complexity; sequence TTSESQNENSANSST. Positions 58-86 are enriched in basic and acidic residues; it reads TIEHVKEAAEGTQVEHVDDSKCMKGEKAQ. Over residues 121–140 the composition is skewed to polar residues; that stretch reads SNGSVAPNVQTTNPLKSKSF. The span at 151 to 167 shows a compositional bias: basic and acidic residues; the sequence is GKHDSAPAESADGEKVK. Ser208 is modified (phosphoserine). Positions 288 to 297 are enriched in basic residues; sequence KSPKLGRKKT. Low complexity predominate over residues 360 to 371; the sequence is PAPAKAAIIPAK. Residues 408–437 show a composition bias toward basic and acidic residues; sequence EDSHETVSPRMNEDRADKSIEVSEAVAVEH. Ser415 bears the Phosphoserine mark.

It belongs to the TPX2 family. In terms of tissue distribution, expressed in seedlings.

It localises to the cytoplasm. The protein localises to the cytoskeleton. Microtubule-associated protein (MAP) that regulates the orientation of interphase cortical microtubules. The protein is Protein WVD2-like 5 of Arabidopsis thaliana (Mouse-ear cress).